The sequence spans 89 residues: Large ribosomal subunit protein uL23c (89 aa).

The protein belongs to the universal ribosomal protein uL23 family. In terms of assembly, part of the 50S ribosomal subunit.

Its subcellular location is the plastid. It is found in the chloroplast. Functionally, binds to 23S rRNA. The protein is Large ribosomal subunit protein uL23c (rpl23) of Staurastrum punctulatum (Green alga).